Reading from the N-terminus, the 315-residue chain is MAAAAAPGALGALSAGRVRLVAACCARLGSAAWARGTAPRRGYSSEVKTEDELRVRHLEEENRGIVVLGINRAYGKNSLSKNLLKMLSKAVDALKSDKKVRTIIIRSEVPGIFCAGADLKERAKMHSSEVGPFVSKIRAVINDIANLPVPTIAAIDGLALGGGLELALACDIRVAASSAKMGLVETKLAIIPGGGGTQRLPRAIGMALAKELIFSARVLDGQEAKAVGLISHVLEQNQEGDAAYRKALDLAREFLPQGPVAMRVAKLAINQGMEVDLVTGLAIEEACYAQTISTKDRLEGLLAFKEKRPPRYKGE.

A mitochondrion-targeting transit peptide spans 1 to 43 (MAAAAAPGALGALSAGRVRLVAACCARLGSAAWARGTAPRRGY). An N6-acetyllysine; alternate modification is found at Lys-76. Lys-76 carries the post-translational modification N6-succinyllysine; alternate. The tract at residues 81–95 (KNLLKMLSKAVDALK) is RNA-binding. Position 85 is an N6-succinyllysine (Lys-85). Residues Lys-89 and Lys-120 each carry the N6-acetyllysine; alternate modification. Residues Lys-89 and Lys-120 each carry the N6-succinyllysine; alternate modification. Residues Lys-124 and Lys-136 each carry the N6-succinyllysine modification. 2 positions are modified to N6-acetyllysine; alternate: Lys-180 and Lys-187. N6-succinyllysine; alternate occurs at positions 180 and 187. Lys-305 is subject to N6-succinyllysine.

It belongs to the enoyl-CoA hydratase/isomerase family. As to quaternary structure, homohexamer.

It localises to the mitochondrion. The catalysed reaction is (3S)-3-hydroxy-3-methylglutaryl-CoA = 3-methyl-(2E)-glutaconyl-CoA + H2O. It carries out the reaction (3S)-citramalyl-CoA = itaconyl-CoA + H2O. It catalyses the reaction 3-hydroxyisovaleryl-CoA = 3-methylbut-2-enoyl-CoA + H2O. The enzyme catalyses (S)-3-hydroxyglutaryl-CoA = (2E)-glutaconyl-CoA + H2O. It functions in the pathway amino-acid degradation; L-leucine degradation; (S)-3-hydroxy-3-methylglutaryl-CoA from 3-isovaleryl-CoA: step 3/3. Catalyzes the fifth step in the leucine degradation pathway, the reversible hydration of 3-methylglutaconyl-CoA (3-MG-CoA) to 3-hydroxy-3-methylglutaryl-CoA (HMG-CoA). Can catalyze the reverse reaction but at a much lower rate in vitro. HMG-CoA is then quickly degraded by another enzyme (such as HMG-CoA lyase) to give acetyl-CoA and acetoacetate. Uses other substrates such as (2E)-glutaconyl-CoA efficiently in vitro, and to a lesser extent 3-methylcrotonyl-CoA (3-methyl-(2E)-butenoyl-CoA), crotonyl-CoA ((2E)-butenoyl-CoA) and 3-hydroxybutanoyl-CoA (the missing carboxylate reduces affinity to the active site). Originally it was identified as an RNA-binding protein as it binds to AU-rich elements (AREs) in vitro. AREs direct rapid RNA degradation and mRNA deadenylation. Might have itaconyl-CoA hydratase activity, converting itaconyl-CoA into citramalyl-CoA in the C5-dicarboxylate catabolism pathway. The C5-dicarboxylate catabolism pathway is required to detoxify itaconate, an antimicrobial metabolite and immunomodulator produced by macrophages during certain infections, that can act as a vitamin B12-poisoning metabolite. The chain is Methylglutaconyl-CoA hydratase, mitochondrial from Rattus norvegicus (Rat).